The sequence spans 90 residues: DNA-directed RNA polymerase subunit Rpo11 (90 aa).

The protein belongs to the archaeal Rpo11/eukaryotic RPB11/RPC19 RNA polymerase subunit family. As to quaternary structure, part of the 13-subunit RNA polymerase complex.

The protein localises to the cytoplasm. The enzyme catalyses RNA(n) + a ribonucleoside 5'-triphosphate = RNA(n+1) + diphosphate. DNA-dependent RNA polymerase (RNAP) catalyzes the transcription of DNA into RNA using the four ribonucleoside triphosphates as substrates. The polypeptide is DNA-directed RNA polymerase subunit Rpo11 (Sulfolobus acidocaldarius (strain ATCC 33909 / DSM 639 / JCM 8929 / NBRC 15157 / NCIMB 11770)).